The sequence spans 1223 residues: RNA-binding protein 20 (1223 aa).

Disordered regions lie at residues 1–59 (MVLA…QAGL), 238–288 (QAYG…PTSQ), and 306–381 (GEVG…GARR). Over residues 29–57 (APAPPAPPGPRGMQPPPPPPPPPPPPPQA) the composition is skewed to pro residues. Composition is skewed to polar residues over residues 238–261 (QAYGSETDSQPSFLPASASTSGSV) and 314–331 (GPNSQWESPHGFSGQSKP). Residues 410–444 (HLPHICSICDKKVFDLKDWELHVKGKLHAQKCLLF) form a U1-type zinc finger. Positions 520–595 (RVVHICNLPE…EKLLIRMSKR (76 aa)) constitute an RRM domain. Over residues 626-636 (EADRYGPERPR) the composition is skewed to basic and acidic residues. 3 disordered regions span residues 626 to 902 (EADR…TNME), 971 to 995 (EISLKSPKEPPSASTSCPSDMDVEM), and 1042 to 1102 (MSSP…STQE). The RS stretch occupies residues 630–657 (YGPERPRSRSPVSRSLSPRSHTPSFTSC). A phosphoserine mark is found at serine 637, serine 639, serine 642, serine 644, serine 662, and serine 681. Positions 638–662 (RSPVSRSLSPRSHTPSFTSCSSSHS) are enriched in low complexity. Basic and acidic residues-rich tracts occupy residues 676–711 (DSWEHSPYARREEERGPAPWRENGEDKRDRTDMWAH) and 718–737 (RQVDKTELDERLEGGRGYRE). Residues 742-752 (SGSPSSLHSVS) are compositionally biased toward low complexity. Serine 744 is subject to Phosphoserine. Composition is skewed to basic and acidic residues over residues 755–774 (KSREDGYYRKEPKGKSDKYL) and 786–852 (RKDE…KEEQ). 8 positions are modified to phosphoserine: serine 803, serine 861, serine 872, serine 887, serine 889, serine 973, serine 976, and serine 1044. A compositionally biased stretch (basic and acidic residues) spans 864–884 (RQEKETESSDAENTRTRKEQD). Positions 1083–1102 (STPTETDLQSQACQGVSTQE) are enriched in polar residues. Residues serine 1111 and serine 1116 each carry the phosphoserine modification. The Matrin-type zinc finger occupies 1157–1188 (FYCKLCGLFYTSEEMAKMSHCRSAVHYRNLQK). The tract at residues 1197–1223 (GLKETEGAGSPRPEDSGIVPHFERKKL) is disordered. Serine 1206 is subject to Phosphoserine.

Associates with components of the U1 and U2 U1 small nuclear ribonucleoprotein complexes. Phosphorylation regulates the subcellular localization. Phosphorylation of Ser-637 and Ser-639 in the RS (arginine/serine-rich) region promotes nuclear localization of the protein. In contrast, phosphorylation of the C-terminal disordered region promotes localization to cytoplasmic ribonucleoprotein granules.

It localises to the nucleus. It is found in the cytoplasm. Its subcellular location is the cytoplasmic ribonucleoprotein granule. RNA-binding protein that acts as a regulator of mRNA splicing of a subset of genes encoding key structural proteins involved in cardiac development, such as TTN (Titin), CACNA1C, CAMK2D or PDLIM5/ENH. Acts as a repressor of mRNA splicing: specifically binds the 5'UCUU-3' motif that is predominantly found within intronic sequences of pre-mRNAs, leading to the exclusion of specific exons in target transcripts. RBM20-mediated exon skipping is hormone-dependent and is essential for TTN isoform transition in both cardiac and skeletal muscles. RBM20-mediated exon skipping of TTN provides substrates for the formation of circular RNA (circRNAs) from the TTN transcripts. Together with RBM24, promotes the expression of short isoforms of PDLIM5/ENH in cardiomyocytes. In Sus scrofa (Pig), this protein is RNA-binding protein 20.